Reading from the N-terminus, the 316-residue chain is L-lactate dehydrogenase (316 aa).

NAD(+) is bound by residues Met14, 14–150 (MIGG…IIGL), Ile15, Asp35, Tyr67, Gly81, Phe82, Val125, Asn127, and Leu150. Arg95 serves as a coordination point for substrate. 2 residues coordinate substrate: Arg158 and His182. The active-site Proton acceptor is the His182.

It belongs to the LDH/MDH superfamily. LDH family. In terms of assembly, homotetramer.

The catalysed reaction is (S)-lactate + NAD(+) = pyruvate + NADH + H(+). Its pathway is fermentation; pyruvate fermentation to lactate; (S)-lactate from pyruvate: step 1/1. The sequence is that of L-lactate dehydrogenase from Plasmodium falciparum (isolate CDC / Honduras).